Consider the following 641-residue polypeptide: Fibrinogen alpha-2 chain (641 aa).

The N-terminal stretch at 1–23 is a signal peptide; that stretch reads MTLRGVSMVLTWCLLVSKAWSSG. The stretch at 107–226 forms a coiled coil; that stretch reads SVSDVSNQVV…IVHESFSVER (120 aa). A disordered region spans residues 228 to 327; sequence DARSLHPYSG…QKTEELSFKK (100 aa). Asparagine 271 carries N-linked (GlcNAc...) asparagine glycosylation. Positions 279–289 are enriched in basic and acidic residues; it reads VDERSKVEKDV. Positions 293–317 are enriched in low complexity; it reads STSSVSSSSSSSSSSSSTSSTISST. The 242-residue stretch at 395 to 636 folds into the Fibrinogen C-terminal domain; the sequence is RTNLSEYIDC…RTAVRFRRVQ (242 aa). A glycan (N-linked (GlcNAc...) asparagine) is linked at asparagine 397. Residues cysteine 404 and cysteine 435 are joined by a disulfide bond. Asparagine 458 is a glycosylation site (N-linked (GlcNAc...) asparagine). A disulfide bridge links cysteine 571 with cysteine 584.

In terms of assembly, heterohexamer; disulfide linked. Contains 2 sets of 3 non-identical chains (alpha, beta and gamma). The 2 heterotrimers are in head to head conformation with the N-termini in a small central domain. Conversion of fibrinogen to fibrin is triggered by thrombin, which cleaves fibrinopeptides A and B from alpha and beta chains, and thus exposes the N-terminal polymerization sites responsible for the formation of the soft clot. The soft clot is converted into the hard clot by factor XIIIA which catalyzes the epsilon-(gamma-glutamyl)lysine cross-linking between gamma chains (stronger) and between alpha chains (weaker) of different monomers. In terms of processing, forms F13A-mediated cross-links between a glutamine and the epsilon-amino group of a lysine residue, forming fibronectin-fibrinogen heteropolymers.

Its subcellular location is the secreted. Fibrinogen has a double function: yielding monomers that polymerize into fibrin and acting as a cofactor in platelet aggregation. The protein is Fibrinogen alpha-2 chain of Petromyzon marinus (Sea lamprey).